A 322-amino-acid chain; its full sequence is Probable manganese-dependent inorganic pyrophosphatase (322 aa).

Mn(2+) is bound by residues His10, Asp14, Asp16, Asp86, His108, and Asp160.

This sequence belongs to the PPase class C family. Mn(2+) is required as a cofactor.

The protein resides in the cytoplasm. The catalysed reaction is diphosphate + H2O = 2 phosphate + H(+). The polypeptide is Probable manganese-dependent inorganic pyrophosphatase (ppaC) (Archaeoglobus fulgidus (strain ATCC 49558 / DSM 4304 / JCM 9628 / NBRC 100126 / VC-16)).